We begin with the raw amino-acid sequence, 88 residues long: YcgL domain-containing protein HI_1446 (88 aa).

The 85-residue stretch at M1–S85 folds into the YcgL domain.

The polypeptide is YcgL domain-containing protein HI_1446 (Haemophilus influenzae (strain ATCC 51907 / DSM 11121 / KW20 / Rd)).